The primary structure comprises 282 residues: Ribosome biogenesis GTPase A (282 aa).

In terms of domain architecture, CP-type G spans 14–178 (RREVTEKLKL…LLDTPGILWP (165 aa)). Residues 58–61 (NKAD), 86–87 (NS), 130–135 (NVGKST), and Gly174 each bind GTP.

It belongs to the TRAFAC class YlqF/YawG GTPase family. MTG1 subfamily. Interacts with ctc. Interacts with the immature 50S ribosome subunit. 2 molecules of rbgA bind to one 50S subunit.

Its subcellular location is the cytoplasm. Essential protein that is required for a late step of 50S ribosomal subunit assembly. Has GTPase activity that is stimulated by interaction with the immature 50S ribosome subunit. Binds to the 23S rRNA. Required for the association of ribosomal proteins rplP and rpmA with the large subunit. This chain is Ribosome biogenesis GTPase A, found in Bacillus pumilus (strain SAFR-032).